The primary structure comprises 443 residues: Clustered-asparagine-rich protein (443 aa).

One can recognise an RRM 1 domain in the interval 16–106; it reads TKLHIQNIPP…RNIDAKFAVP (91 aa). Positions 253–279 are disordered; the sequence is NHLNNNNNNINNNNNNNNNNNNNNNVM. Low complexity predominate over residues 256–277; sequence NNNNNNINNNNNNNNNNNNNNN. Residues 342-435 enclose the RRM 2 domain; the sequence is SSITIMKKQN…KYLKVQLKKG (94 aa).

The chain is Clustered-asparagine-rich protein from Plasmodium falciparum.